The primary structure comprises 255 residues: RNA polymerase sigma-F factor (255 aa).

The short motif at Asp-61 to Val-74 is the Polymerase core binding element. Residues Gln-221–Lys-240 constitute a DNA-binding region (H-T-H motif).

Belongs to the sigma-70 factor family. As to quaternary structure, interacts transiently with the RNAP core.

Its activity is regulated as follows. Interaction with SpoIIAB inhibits sigma-F activity throughout the cell before the formation of the asymmetric septum; after septation the interaction is confined to the mother cell, and sigma-F activity is released in the prespore. Fin, a second, forespore-specific anti-sigma factor is induced in 2 successive waves by sigma-F and sigma-G, by antagonizing sigma-F it allows the switch to sigma-G factor and progression to the late sporulation development stages. Its function is as follows. Sigma factors are initiation factors that promote the attachment of RNA polymerase to specific initiation sites and are then released. This sigma factor is responsible for the expression of sporulation specific genes. Interaction with SpoIIAB inhibits sigma-F activity throughout the cell before the formation of the asymmetric septum; after septation the interaction is confined to the mother cell, and sigma F activity is released in the prespore. Responsible for expression of csfB (the anti-sigma-G factor Gin). Associates with the RNAP core only in stationary phase cells. This is RNA polymerase sigma-F factor (sigF) from Bacillus subtilis (strain 168).